The chain runs to 384 residues: Guanine nucleotide-binding protein alpha-2 subunit (384 aa).

Positions 1–23 (MGLVCSRNRRYRDSDPEENAQAA) are disordered. Residue G2 is the site of N-myristoyl glycine attachment. C5 carries the S-palmitoyl cysteine lipid modification. A G-alpha domain is found at 38-384 (HIQKLLLLGA…RRNLFEAGLL (347 aa)). A G1 motif region spans residues 41-54 (KLLLLGAGESGKST). Residues E49, S50, G51, K52, S53, T54, D163, L188, Y189, T194, G222, N288, K289, D291, and A356 each coordinate GTP. Residue S53 participates in Mg(2+) binding. Positions 186–194 (DVLYARVRT) are G2 motif. A Mg(2+)-binding site is contributed by T194. The segment at 215 to 224 (YRLFDVGGQR) is G3 motif. A G4 motif region spans residues 284 to 291 (MLFLNKFD). Residues 354–359 (TTALDQ) form a G5 motif region.

The protein belongs to the G-alpha family. In terms of assembly, g proteins are composed of 3 units; alpha, beta and gamma. The alpha chain contains the guanine nucleotide binding site. Mg(2+) serves as cofactor.

In terms of biological role, guanine nucleotide-binding proteins (G proteins) are involved as modulators or transducers in various transmembrane signaling systems. This chain is Guanine nucleotide-binding protein alpha-2 subunit (GPA2), found in Pisum sativum (Garden pea).